Reading from the N-terminus, the 531-residue chain is Peptide chain release factor 3 (531 aa).

One can recognise a tr-type G domain in the interval 10–278 (RRRRTFAIIS…SLIEWAPAPK (269 aa)). GTP-binding positions include 19 to 26 (SHPDAGKT), 87 to 91 (DTPGH), and 141 to 144 (NKYD).

The protein belongs to the TRAFAC class translation factor GTPase superfamily. Classic translation factor GTPase family. PrfC subfamily.

The protein resides in the cytoplasm. Increases the formation of ribosomal termination complexes and stimulates activities of RF-1 and RF-2. It binds guanine nucleotides and has strong preference for UGA stop codons. It may interact directly with the ribosome. The stimulation of RF-1 and RF-2 is significantly reduced by GTP and GDP, but not by GMP. This chain is Peptide chain release factor 3, found in Neisseria meningitidis serogroup A / serotype 4A (strain DSM 15465 / Z2491).